The chain runs to 109 residues: Hainantoxin-XVIII-3 (109 aa).

Residues 1 to 18 form the signal peptide; it reads MKLSIIIIATSLVIAVVA. A propeptide spanning residues 19–46 is cleaved from the precursor; it reads FPSKDSKAIENDKTEQRMEIVVQETARA. 4 cysteine pairs are disulfide-bonded: Cys47-Cys62, Cys55-Cys68, Cys59-Cys108, and Cys61-Cys81.

Belongs to the neurotoxin 25 family. F7 subfamily. As to expression, expressed by the venom gland.

The protein localises to the secreted. In terms of biological role, putative ion channel inhibitor. The protein is Hainantoxin-XVIII-3 of Cyriopagopus hainanus (Chinese bird spider).